The chain runs to 513 residues: Cobyric acid synthase (513 aa).

Positions 270-470 (RLRIAIVAYP…THGLFESPAV (201 aa)) constitute a GATase cobBQ-type domain. Cys351 acts as the Nucleophile in catalysis. His462 is a catalytic residue.

It belongs to the CobB/CobQ family. CobQ subfamily.

It functions in the pathway cofactor biosynthesis; adenosylcobalamin biosynthesis. Its function is as follows. Catalyzes amidations at positions B, D, E, and G on adenosylcobyrinic A,C-diamide. NH(2) groups are provided by glutamine, and one molecule of ATP is hydrogenolyzed for each amidation. The protein is Cobyric acid synthase of Leptothrix cholodnii (strain ATCC 51168 / LMG 8142 / SP-6) (Leptothrix discophora (strain SP-6)).